Consider the following 210-residue polypeptide: Uracil phosphoribosyltransferase (210 aa).

Residues R78, R103, and 130–138 contribute to the 5-phospho-alpha-D-ribose 1-diphosphate site; that span reads DPMLATGGT. Residues I193 and 198–200 each bind uracil; that span reads GDA. A 5-phospho-alpha-D-ribose 1-diphosphate-binding site is contributed by D199.

The protein belongs to the UPRTase family. The cofactor is Mg(2+).

The enzyme catalyses UMP + diphosphate = 5-phospho-alpha-D-ribose 1-diphosphate + uracil. It participates in pyrimidine metabolism; UMP biosynthesis via salvage pathway; UMP from uracil: step 1/1. With respect to regulation, allosterically activated by GTP. Functionally, catalyzes the conversion of uracil and 5-phospho-alpha-D-ribose 1-diphosphate (PRPP) to UMP and diphosphate. The chain is Uracil phosphoribosyltransferase from Stenotrophomonas maltophilia (strain R551-3).